Reading from the N-terminus, the 966-residue chain is Leucine--tRNA ligase (966 aa).

The 'HIGH' region signature appears at 41-51 (PYLNGNLHAGH). The 'KMSKS' region motif lies at 632–636 (KMSKS). Residue Lys-635 participates in ATP binding.

This sequence belongs to the class-I aminoacyl-tRNA synthetase family.

It localises to the cytoplasm. The enzyme catalyses tRNA(Leu) + L-leucine + ATP = L-leucyl-tRNA(Leu) + AMP + diphosphate. This Methanosarcina barkeri (strain Fusaro / DSM 804) protein is Leucine--tRNA ligase.